We begin with the raw amino-acid sequence, 394 residues long: Putative bacilysin exporter BacE (394 aa).

A run of 11 helical transmembrane segments spans residues 11–31, 43–63, 69–89, 92–112, 142–162, 166–186, 215–235, 244–264, 288–308, 332–352, and 353–373; these read LLYG…ALLI, SGVI…GVLV, IKIM…LTFL, GEYP…GVFF, IIVG…ELAV, GVTY…FVPI, MFTM…FPIV, IGNF…AALV, LFLF…FFIA, IFSV…MFIN, and ILSA…LFLH.

Belongs to the major facilitator superfamily. Drug:H(+) antiporter-3 (DHA3) (TC 2.A.1.21) family.

Its subcellular location is the cell membrane. Part of the bacilysin biosynthesis operon. May be involved in self-resistance to bacilysin by permitting efflux of this antibiotic. The polypeptide is Putative bacilysin exporter BacE (bacE) (Bacillus subtilis (strain 168)).